Here is a 453-residue protein sequence, read N- to C-terminus: Aryl hydrocarbon receptor nuclear translocator homolog (453 aa).

Residues 44-97 (FARENHSEIERRRRNKMTHYINELAEMVPQCASLGRKPDKLTILRMAVSHMKGI) form the bHLH domain. 2 consecutive PAS domains span residues 115–193 (DQEL…LDLK) and 277–347 (ASMP…LSDQ). Residues 348 to 392 (PMRINIRVRTSTDYIPCTVSAYKFMNPYSEQFEYVVATHQIAPQE) enclose the PAC domain. Positions 410-453 (EFGELGGAPSAVDYGQSSSGGWRPEAQGAPQAQWQWDPMNGYNQ) are disordered.

In terms of assembly, interacts with hif-1. Heterodimer; efficient DNA binding requires dimerization with another bHLH protein. Forms a heterodimer with ahr-1; binds DNA as heterodimer. Forms a heterodimer with PAS domain-containing protein cky-1; binds DNA as heterodimer. As to expression, expressed in many cell types throughout development, including hypodermal cells, intestinal cells, pharyngeal cells, and neurons. Expressed in every cell during embryo.

The protein localises to the nucleus. In terms of biological role, transcription factor. Efficient DNA binding requires dimerization with another bHLH protein, such as cky-1 or ahr-1. Regulates transcription of target genes, probably acting in complex with cky-1. Has a role in cellular differentiation. Required for pharyngeal development. In collaboration with ahr-1 it is involved in RMEL/R and SDQR neuron cell migration. Acts in the cellular response to hypoxia. Involved in aggregation behavior by regulating soluble guanylate cyclase gene expression in the URX neurons. The polypeptide is Aryl hydrocarbon receptor nuclear translocator homolog (Caenorhabditis elegans).